The sequence spans 459 residues: Bifunctional protein GlmU (459 aa).

The pyrophosphorylase stretch occupies residues 1 to 230 (MSNRFAVILA…FDETLGVNDR (230 aa)). Residues 9-12 (LAAG), lysine 23, glutamine 73, and 78-79 (GT) contribute to the UDP-N-acetyl-alpha-D-glucosamine site. Mg(2+) is bound at residue aspartate 103. Residues glycine 140, glutamate 155, asparagine 170, and asparagine 228 each contribute to the UDP-N-acetyl-alpha-D-glucosamine site. Asparagine 228 is a binding site for Mg(2+). The tract at residues 231-251 (VALSQAEIIMKNRINRKNMVN) is linker. Residues 252–459 (GVTIIDPSNT…VDQLLNKKKS (208 aa)) form an N-acetyltransferase region. Arginine 333 and lysine 351 together coordinate UDP-N-acetyl-alpha-D-glucosamine. Catalysis depends on histidine 363, which acts as the Proton acceptor. 2 residues coordinate UDP-N-acetyl-alpha-D-glucosamine: tyrosine 366 and asparagine 377. Acetyl-CoA contacts are provided by residues 386-387 (NY), alanine 423, and arginine 440.

This sequence in the N-terminal section; belongs to the N-acetylglucosamine-1-phosphate uridyltransferase family. In the C-terminal section; belongs to the transferase hexapeptide repeat family. In terms of assembly, homotrimer. Requires Mg(2+) as cofactor.

It is found in the cytoplasm. It carries out the reaction alpha-D-glucosamine 1-phosphate + acetyl-CoA = N-acetyl-alpha-D-glucosamine 1-phosphate + CoA + H(+). It catalyses the reaction N-acetyl-alpha-D-glucosamine 1-phosphate + UTP + H(+) = UDP-N-acetyl-alpha-D-glucosamine + diphosphate. It functions in the pathway nucleotide-sugar biosynthesis; UDP-N-acetyl-alpha-D-glucosamine biosynthesis; N-acetyl-alpha-D-glucosamine 1-phosphate from alpha-D-glucosamine 6-phosphate (route II): step 2/2. The protein operates within nucleotide-sugar biosynthesis; UDP-N-acetyl-alpha-D-glucosamine biosynthesis; UDP-N-acetyl-alpha-D-glucosamine from N-acetyl-alpha-D-glucosamine 1-phosphate: step 1/1. Its pathway is bacterial outer membrane biogenesis; LPS lipid A biosynthesis. Functionally, catalyzes the last two sequential reactions in the de novo biosynthetic pathway for UDP-N-acetylglucosamine (UDP-GlcNAc). The C-terminal domain catalyzes the transfer of acetyl group from acetyl coenzyme A to glucosamine-1-phosphate (GlcN-1-P) to produce N-acetylglucosamine-1-phosphate (GlcNAc-1-P), which is converted into UDP-GlcNAc by the transfer of uridine 5-monophosphate (from uridine 5-triphosphate), a reaction catalyzed by the N-terminal domain. The sequence is that of Bifunctional protein GlmU from Bacillus thuringiensis subsp. konkukian (strain 97-27).